The primary structure comprises 792 residues: Phenylalanine--tRNA ligase beta subunit (792 aa).

Residues 39 to 147 enclose the tRNA-binding domain; the sequence is GESLGQVVVA…DDAPVGQALA (109 aa). The B5 domain occupies 400–475; it reads PQPVHIRLRR…RIHGYDRVPT (76 aa). Mg(2+) is bound by residues D453, D459, E462, and E463. The 94-residue stretch at 698 to 791 folds into the FDX-ACB domain; it reads SRFPSVRRDL…IEREHRARIR (94 aa).

This sequence belongs to the phenylalanyl-tRNA synthetase beta subunit family. Type 1 subfamily. Tetramer of two alpha and two beta subunits. Mg(2+) serves as cofactor.

The protein resides in the cytoplasm. The catalysed reaction is tRNA(Phe) + L-phenylalanine + ATP = L-phenylalanyl-tRNA(Phe) + AMP + diphosphate + H(+). In Xanthomonas axonopodis pv. citri (strain 306), this protein is Phenylalanine--tRNA ligase beta subunit.